The sequence spans 180 residues: Shikimate kinase (180 aa).

14–19 (GAGKSC) provides a ligand contact to ATP. S18 contributes to the Mg(2+) binding site. Substrate-binding residues include D36, R60, and G82. Residue R120 coordinates ATP. R139 is a binding site for substrate.

The protein belongs to the shikimate kinase family. As to quaternary structure, monomer. The cofactor is Mg(2+).

It is found in the cytoplasm. The catalysed reaction is shikimate + ATP = 3-phosphoshikimate + ADP + H(+). The protein operates within metabolic intermediate biosynthesis; chorismate biosynthesis; chorismate from D-erythrose 4-phosphate and phosphoenolpyruvate: step 5/7. Functionally, catalyzes the specific phosphorylation of the 3-hydroxyl group of shikimic acid using ATP as a cosubstrate. The polypeptide is Shikimate kinase (Xanthomonas euvesicatoria pv. vesicatoria (strain 85-10) (Xanthomonas campestris pv. vesicatoria)).